The following is a 434-amino-acid chain: GPI mannosyltransferase 2 (434 aa).

Helical transmembrane passes span 22–42, 109–129, 145–165, 170–190, 210–230, 252–272, 311–331, 354–374, 377–397, and 411–431; these read LSLAFWLWKAFVFLIIIGCPG, ILSFLTSVALSHIAHYFSVLA, GALISFLSATLHIICPAGAFL, GESLFSFLNITGYFLYSSSLL, LFSIATAVRSNGILSGALFAF, LGVIVVGGCVIALGLIVPQWI, YWTLSNLPLFILAFPMLFLMC, LAAPNGLLAVMAFTSYHVQII, ISSGYPLWYWYIICQLSSHVA, and IAIQGMVIYAIVQAVLFGSFL.

This sequence belongs to the PIGV family.

Its subcellular location is the endoplasmic reticulum membrane. It participates in glycolipid biosynthesis; glycosylphosphatidylinositol-anchor biosynthesis. Its function is as follows. Mannosyltransferase involved in glycosylphosphatidylinositol-anchor biosynthesis. Transfers the second mannose to the glycosylphosphatidylinositol during GPI precursor assembly. The protein is GPI mannosyltransferase 2 (gpi18) of Aspergillus oryzae (strain ATCC 42149 / RIB 40) (Yellow koji mold).